We begin with the raw amino-acid sequence, 276 residues long: Large ribosomal subunit protein uL2 (276 aa).

Disordered regions lie at residues 1 to 20 (MGIK…TTND) and 219 to 276 (TVRG…RRKK). The span at 7–20 (NPTTNGRRNMTTND) shows a compositional bias: polar residues.

The protein belongs to the universal ribosomal protein uL2 family. As to quaternary structure, part of the 50S ribosomal subunit. Forms a bridge to the 30S subunit in the 70S ribosome.

Its function is as follows. One of the primary rRNA binding proteins. Required for association of the 30S and 50S subunits to form the 70S ribosome, for tRNA binding and peptide bond formation. It has been suggested to have peptidyltransferase activity; this is somewhat controversial. Makes several contacts with the 16S rRNA in the 70S ribosome. The protein is Large ribosomal subunit protein uL2 of Bacillus anthracis (strain A0248).